Reading from the N-terminus, the 623-residue chain is Heterogeneous nuclear ribonucleoprotein L (623 aa).

The segment covering 1–16 (MSRRLLPRAEKRRRRL) has biased composition (basic residues). Residues 1–97 (MSRRLLPRAE…NYDDPHKTPA (97 aa)) form a disordered region. Basic and acidic residues predominate over residues 17-27 (EQRQQPDEQLR). Low complexity predominate over residues 28–37 (RAGAMVKMAA). Over residues 38 to 54 (AGGGGGGGRYYGGGNEG) the composition is skewed to gly residues. Glycyl lysine isopeptide (Lys-Gly) (interchain with G-Cter in SUMO2) cross-links involve residues Lys-59 and Lys-62. Over residues 69–87 (QHGGGGGGGSGAAGGGGGE) the composition is skewed to gly residues. Residue Ser-98 is modified to Phosphoserine. Residues 99–173 (PVVHIRGLID…HPAFVNYSTS (75 aa)) enclose the RRM 1 domain. Lys-133 participates in a covalent cross-link: Glycyl lysine isopeptide (Lys-Gly) (interchain with G-Cter in SUMO2). Ser-182 is subject to Phosphoserine. Residues 190–267 (SVLLFTILNP…CTLKIEYAKP (78 aa)) form the RRM 2 domain. An N6-acetyllysine modification is found at Lys-266. The span at 281 to 298 (DYTNPNLSGQGDPGSNPN) shows a compositional bias: polar residues. The tract at residues 281-413 (DYTNPNLSGQ…PPPPDYGPHA (133 aa)) is disordered. A phosphoserine mark is found at Ser-288 and Ser-295. Lys-299 is covalently cross-linked (Glycyl lysine isopeptide (Lys-Gly) (interchain with G-Cter in SUMO2)). Arg-388 and Arg-392 each carry asymmetric dimethylarginine. The segment covering 398–409 (GHPPPPPPPPDY) has biased composition (pro residues). The residue at position 415 (Ser-415) is a Phosphoserine. RRM domains are found at residues 416–490 (PVLM…VSKQ) and 498–586 (SYGL…WDSK). Ser-578 carries the phosphoserine; by CaMK4 modification. Lys-602 is covalently cross-linked (Glycyl lysine isopeptide (Lys-Gly) (interchain with G-Cter in SUMO2)).

In terms of assembly, identified in a IGF2BP1-dependent mRNP granule complex containing untranslated mRNAs. Interacts with HNRNPLL. Interacts with APEX1; the interaction is DNA-dependent. Component of a complex with SETD2. Interacts with ELAVL1. Part of a transcription inhibitory ribonucleoprotein complex composed at least of the circular RNA circZNF827, ZNF827 and HNRNPK. Interacts with CHD8 in an RNA-dependent manner. Several isoelectric forms of the L protein are probably the results of post-translational modifications. Post-translationally, phosphorylation at Ser-578 by CaMK4 enhances interaction with a CaMK4-responsive RNA element (CaRRE1), and prevents inclusion of the stress axis-regulated exon (STREX) of the KCNMA1 potassium channel transcripts upon membrane depolarization.

It localises to the nucleus. Its subcellular location is the nucleoplasm. It is found in the cytoplasm. Splicing factor binding to exonic or intronic sites and acting as either an activator or repressor of exon inclusion. Exhibits a binding preference for CA-rich elements. Component of the heterogeneous nuclear ribonucleoprotein (hnRNP) complexes and associated with most nascent transcripts. Associates, together with APEX1, to the negative calcium responsive element (nCaRE) B2 of the APEX2 promoter. As part of a ribonucleoprotein complex composed at least of ZNF827, HNRNPK and the circular RNA circZNF827 that nucleates the complex on chromatin, may negatively regulate the transcription of genes involved in neuronal differentiation. Regulates alternative splicing of a core group of genes involved in neuronal differentiation, likely by mediating H3K36me3-coupled transcription elongation and co-transcriptional RNA processing via interaction with CHD8. The polypeptide is Heterogeneous nuclear ribonucleoprotein L (Rattus norvegicus (Rat)).